A 309-amino-acid chain; its full sequence is MDLLVNKYQPSEIQDIVGNEATMELVSLMIESRDMPHLLFTGPPGTGKTTCAKILARRLLGNKEGLLELNASDERGIDTVRTTIKSFAQRRVKDCEFKIIILDEADSMTTTAQQAMRRVMEIHSSECRFILICNVFTKIFEPIQSRCAILRFDRIEQSVILKRLKEISEGEGIRITAEALDLVVELSDGDMRQSLNILQACINSPGTVDQDYIIKIIGLPSPKRIEKVLQRLLKREVEEALEMFDEIWEEKFDPLDLINSFFRAAKNMESYELLKVIGLANLRISEGVNSRLQFYGMFWDILDMGSKRL.

Residues V5, V17, G42–T50, N134, and R192 contribute to the ATP site.

It belongs to the activator 1 small subunits family. Component of the replication factor C (RFC) complex.

The protein resides in the nucleus. Functionally, component of ATP-dependent clamp loader (RFC and RFC-like) complexes for DNA clamps. During a clamp loading circle, the RFC:clamp complex binds to DNA and the recognition of the double-stranded/single-stranded junction stimulates ATP hydrolysis by RFC. The complex presumably provides bipartite ATP sites in which one subunit supplies a catalytic site for hydrolysis of ATP bound to the neighboring subunit. Dissociation of RFC from the clamp leaves the clamp encircling DNA. Component of the replication factor C (RFC or activator 1) complex which acts during elongation of primed DNA templates by DNA polymerase delta and epsilon. RFC has an essential but redundant activity in sister chromatid cohesion establishment. This is Replication factor C subunit 4 (RFC4) from Encephalitozoon cuniculi (strain GB-M1) (Microsporidian parasite).